The primary structure comprises 111 residues: Large ribosomal subunit protein uL22 (111 aa).

The protein belongs to the universal ribosomal protein uL22 family. Part of the 50S ribosomal subunit.

Its function is as follows. This protein binds specifically to 23S rRNA; its binding is stimulated by other ribosomal proteins, e.g. L4, L17, and L20. It is important during the early stages of 50S assembly. It makes multiple contacts with different domains of the 23S rRNA in the assembled 50S subunit and ribosome. The globular domain of the protein is located near the polypeptide exit tunnel on the outside of the subunit, while an extended beta-hairpin is found that lines the wall of the exit tunnel in the center of the 70S ribosome. The polypeptide is Large ribosomal subunit protein uL22 (Alkalilimnicola ehrlichii (strain ATCC BAA-1101 / DSM 17681 / MLHE-1)).